A 239-amino-acid chain; its full sequence is Ubiquinone biosynthesis O-methyltransferase (239 aa).

S-adenosyl-L-methionine-binding residues include R44, G63, D84, and M128.

The protein belongs to the methyltransferase superfamily. UbiG/COQ3 family.

The catalysed reaction is a 3-demethylubiquinol + S-adenosyl-L-methionine = a ubiquinol + S-adenosyl-L-homocysteine + H(+). The enzyme catalyses a 3-(all-trans-polyprenyl)benzene-1,2-diol + S-adenosyl-L-methionine = a 2-methoxy-6-(all-trans-polyprenyl)phenol + S-adenosyl-L-homocysteine + H(+). It functions in the pathway cofactor biosynthesis; ubiquinone biosynthesis. Its function is as follows. O-methyltransferase that catalyzes the 2 O-methylation steps in the ubiquinone biosynthetic pathway. This is Ubiquinone biosynthesis O-methyltransferase from Xanthomonas axonopodis pv. citri (strain 306).